A 62-amino-acid chain; its full sequence is Photosystem II reaction center protein Z (62 aa).

Transmembrane regions (helical) follow at residues alanine 8–alanine 28 and phenylalanine 41–isoleucine 61.

The protein belongs to the PsbZ family. As to quaternary structure, PSII is composed of 1 copy each of membrane proteins PsbA, PsbB, PsbC, PsbD, PsbE, PsbF, PsbH, PsbI, PsbJ, PsbK, PsbL, PsbM, PsbT, PsbY, PsbZ, Psb30/Ycf12, at least 3 peripheral proteins of the oxygen-evolving complex and a large number of cofactors. It forms dimeric complexes.

Its subcellular location is the plastid. It localises to the chloroplast thylakoid membrane. Functionally, may control the interaction of photosystem II (PSII) cores with the light-harvesting antenna, regulates electron flow through the 2 photosystem reaction centers. PSII is a light-driven water plastoquinone oxidoreductase, using light energy to abstract electrons from H(2)O, generating a proton gradient subsequently used for ATP formation. This chain is Photosystem II reaction center protein Z, found in Cucumis sativus (Cucumber).